The primary structure comprises 575 residues: Acyloxyacyl hydrolase (575 aa).

An N-terminal signal peptide occupies residues 1–23; it reads MQSPWKILTVAPLFLLLSLQSSA. A propeptide spanning residues 24 to 34 is cleaved from the precursor; it reads SPANDDQSRPS. In terms of domain architecture, Saposin B-type spans 37–118; the sequence is NGHTCVGCVL…HTLEFCKQNT (82 aa). The tract at residues 38 to 70 is important for enzyme activity, localization to cytoplasmic vesicles, and protein stability; the sequence is GHTCVGCVLVVSVIEQLAQVHNSTVQASMERLC. 8 disulfide bridges follow: C41/C114, C44/C108, C70/C83, C123/C453, C160/C169, C206/C230, C249/C329, and C376/C459. An N-linked (GlcNAc...) asparagine glycan is attached at N59. Residues 173-177 are lipopolysaccharide binding; that stretch reads KLAME. Residues D184, D186, D188, Y190, D205, N207, D208, D210, V213, D223, D227, N229, N231, I233, and E245 each coordinate Ca(2+). N-linked (GlcNAc...) asparagine glycosylation occurs at N207. Residue S263 is part of the active site. N-linked (GlcNAc...) asparagine glycans are attached at residues N409 and N466.

In terms of assembly, heterodimer of the large and small subunits; disulfide-linked. Ca(2+) serves as cofactor. Post-translationally, cleaved into a large and a small subunit. The small subunit is N-glycosylated.

The protein resides in the secreted. It is found in the cytoplasmic vesicle. The catalysed reaction is a 3-(acyloxy)acyl derivative of bacterial toxin + H2O = a 3-hydroxyacyl derivative of bacterial toxin + a fatty acid + H(+). Its activity is regulated as follows. Inhibited by EDTA. Its function is as follows. Removes the secondary (acyloxyacyl-linked) fatty acyl chains from the lipid A region of bacterial lipopolysaccharides. By breaking down LPS, terminates the host response to bacterial infection and prevents prolonged and damaging inflammatory responses. In peritoneal macrophages, seems to be important for recovery from a state of immune tolerance following infection by Gram-negative bacteria. This chain is Acyloxyacyl hydrolase, found in Homo sapiens (Human).